The chain runs to 125 residues: Small ribosomal subunit protein uS13 (125 aa).

It belongs to the universal ribosomal protein uS13 family. As to quaternary structure, part of the 30S ribosomal subunit. Forms a loose heterodimer with protein S19. Forms two bridges to the 50S subunit in the 70S ribosome.

Functionally, located at the top of the head of the 30S subunit, it contacts several helices of the 16S rRNA. In the 70S ribosome it contacts the 23S rRNA (bridge B1a) and protein L5 of the 50S subunit (bridge B1b), connecting the 2 subunits; these bridges are implicated in subunit movement. Contacts the tRNAs in the A and P-sites. The chain is Small ribosomal subunit protein uS13 from Rickettsia akari (strain Hartford).